Reading from the N-terminus, the 1207-residue chain is DNA-directed RNA polymerase subunit beta' (1207 aa).

Zn(2+) contacts are provided by Cys-60, Cys-62, Cys-75, and Cys-78. Positions 449, 451, and 453 each coordinate Mg(2+). Positions 822, 896, 903, and 906 each coordinate Zn(2+).

Belongs to the RNA polymerase beta' chain family. The RNAP catalytic core consists of 2 alpha, 1 beta, 1 beta' and 1 omega subunit. When a sigma factor is associated with the core the holoenzyme is formed, which can initiate transcription. Requires Mg(2+) as cofactor. The cofactor is Zn(2+).

It catalyses the reaction RNA(n) + a ribonucleoside 5'-triphosphate = RNA(n+1) + diphosphate. DNA-dependent RNA polymerase catalyzes the transcription of DNA into RNA using the four ribonucleoside triphosphates as substrates. The polypeptide is DNA-directed RNA polymerase subunit beta' (Staphylococcus aureus (strain USA300)).